A 466-amino-acid chain; its full sequence is Transcription factor SOX-10 (466 aa).

Disordered regions lie at residues 1-67 (MAEE…DDDK), 160-198 (LRMQ…TDQG), 213-275 (DHRH…DFGN), 355-375 (QVKT…QPST), and 433-466 (RPLY…LSRP). Low complexity predominate over residues 23 to 32 (LSPSSAPSLG). Ser-24 is modified (phosphoserine). The tract at residues 62–102 (EADDDKFPVCIREAVSQVLSGYDWTLVPMPVRVNGASKSKP) is dimerization (DIM). The HMG box DNA-binding region spans 104–172 (VKRPMNAFMV…QHKKDHPDYK (69 aa)). 2 stretches are compositionally biased toward basic and acidic residues: residues 160 to 173 (LRMQ…DYKY) and 254 to 271 (ADPK…KPHI). The tract at residues 228–310 (PEHPSGQSHG…LPPNGHPGHV (83 aa)) is transactivation domain (TAM). The transactivation domain (TAC) stretch occupies residues 353–466 (KAQVKTETTG…QPVYTTLSRP (114 aa)). Residues 440–466 (SDPSPSGPQSHSPTHWEQPVYTTLSRP) show a composition bias toward polar residues.

Monomer. Interacts with Armcx3 at the mitochondrial outer membrane surface. Interacts with PAX3. In terms of tissue distribution, predominant expression in glial cells of the nervous system.

Its subcellular location is the cytoplasm. The protein resides in the nucleus. It localises to the mitochondrion outer membrane. Its function is as follows. Transcription factor that plays a central role in developing and mature glia. Specifically activates expression of myelin genes, during oligodendrocyte (OL) maturation, such as DUSP15 and MYRF, thereby playing a central role in oligodendrocyte maturation and CNS myelination. Once induced, MYRF cooperates with SOX10 to implement the myelination program. Transcriptional activator of MITF, acting synergistically with PAX3. Transcriptional activator of MBP, via binding to the gene promoter. The sequence is that of Transcription factor SOX-10 (Sox10) from Rattus norvegicus (Rat).